The primary structure comprises 65 residues: Diapause-specific peptide (65 aa).

A signal peptide spans 1 to 24; that stretch reads MGAALKMTIFLLIVACAMIATTEA. 3 disulfide bridges follow: cysteine 31–cysteine 45, cysteine 35–cysteine 57, and cysteine 46–cysteine 64.

Highly expressed in the fat body.

The protein localises to the secreted. In terms of biological role, has antifungal activity against T.rubrum. Blocks voltage-dependent N-type calcium channels (Cav2.2 / CACNA1B). The chain is Diapause-specific peptide from Gastrophysa atrocyanea (Leaf beetle).